A 186-amino-acid polypeptide reads, in one-letter code: UPF0461 protein C5orf24 homolog (186 aa).

Residues 60 to 69 (NETHLQTSTS) are compositionally biased toward polar residues. Positions 60–140 (NETHLQTSTS…AAGYKVSPGR (81 aa)) are disordered. The segment covering 78–92 (LKKKKNLGRSGKRGR) has biased composition (basic residues). Over residues 94–107 (SGTTKSAGYRTSTG) the composition is skewed to polar residues.

This sequence belongs to the UPF0461 family.

The chain is UPF0461 protein C5orf24 homolog from Xenopus tropicalis (Western clawed frog).